We begin with the raw amino-acid sequence, 449 residues long: 3-phosphoshikimate 1-carboxyvinyltransferase (449 aa).

Positions 28, 29, and 33 each coordinate 3-phosphoshikimate. Lys-28 contacts phosphoenolpyruvate. Residues Gly-105 and Arg-133 each contribute to the phosphoenolpyruvate site. 3-phosphoshikimate-binding residues include Ser-179, Gln-181, Asp-332, and Lys-359. Gln-181 serves as a coordination point for phosphoenolpyruvate. Asp-332 serves as the catalytic Proton acceptor. Phosphoenolpyruvate is bound by residues Arg-363 and Arg-406.

This sequence belongs to the EPSP synthase family. Monomer.

Its subcellular location is the cytoplasm. The enzyme catalyses 3-phosphoshikimate + phosphoenolpyruvate = 5-O-(1-carboxyvinyl)-3-phosphoshikimate + phosphate. It functions in the pathway metabolic intermediate biosynthesis; chorismate biosynthesis; chorismate from D-erythrose 4-phosphate and phosphoenolpyruvate: step 6/7. In terms of biological role, catalyzes the transfer of the enolpyruvyl moiety of phosphoenolpyruvate (PEP) to the 5-hydroxyl of shikimate-3-phosphate (S3P) to produce enolpyruvyl shikimate-3-phosphate and inorganic phosphate. In Nitrobacter winogradskyi (strain ATCC 25391 / DSM 10237 / CIP 104748 / NCIMB 11846 / Nb-255), this protein is 3-phosphoshikimate 1-carboxyvinyltransferase.